We begin with the raw amino-acid sequence, 194 residues long: Endonuclease V (194 aa).

2 residues coordinate Mg(2+): Asp31 and Glu95.

The protein belongs to the endonuclease V family. Mg(2+) is required as a cofactor.

It localises to the cytoplasm. It catalyses the reaction Endonucleolytic cleavage at apurinic or apyrimidinic sites to products with a 5'-phosphate.. Functionally, DNA repair enzyme involved in the repair of deaminated bases. Selectively cleaves double-stranded DNA at the second phosphodiester bond 3' to a deoxyinosine leaving behind the intact lesion on the nicked DNA. The chain is Endonuclease V from Pyrococcus abyssi (strain GE5 / Orsay).